We begin with the raw amino-acid sequence, 450 residues long: Serine--tRNA ligase, cytoplasmic (450 aa).

Position 238–240 (238–240 (TSE)) interacts with L-serine. ATP is bound by residues 271-273 (RRE) and V287. Residue E294 coordinates L-serine. Residue 358–361 (ELVS) participates in ATP binding. T396 is an L-serine binding site.

This sequence belongs to the class-II aminoacyl-tRNA synthetase family. Type-1 seryl-tRNA synthetase subfamily. As to quaternary structure, homodimer. The tRNA molecule binds across the dimer.

The protein localises to the cytoplasm. Its subcellular location is the cytosol. The catalysed reaction is tRNA(Ser) + L-serine + ATP = L-seryl-tRNA(Ser) + AMP + diphosphate + H(+). Catalyzes the attachment of serine to tRNA(Ser) in a two-step reaction: serine is first activated by ATP to form Ser-AMP and then transferred to the acceptor end of tRNA(Ser). The protein is Serine--tRNA ligase, cytoplasmic of Schizosaccharomyces pombe (strain 972 / ATCC 24843) (Fission yeast).